Reading from the N-terminus, the 125-residue chain is UPF0738 protein GK0828 (125 aa).

The protein belongs to the UPF0738 family.

The polypeptide is UPF0738 protein GK0828 (Geobacillus kaustophilus (strain HTA426)).